A 318-amino-acid chain; its full sequence is Deoxyribose-phosphate aldolase (318 aa).

Residue Asp-155 is the Proton donor/acceptor of the active site. Lys-218 acts as the Schiff-base intermediate with acetaldehyde in catalysis. Lys-254 serves as the catalytic Proton donor/acceptor.

Belongs to the DeoC/FbaB aldolase family. DeoC type 2 subfamily. Interacts with YBX1. As to expression, mainly expressed in liver, lung and colon.

It is found in the cytoplasm. The protein localises to the cytoplasmic granule. The protein resides in the nucleus. It catalyses the reaction 2-deoxy-D-ribose 5-phosphate = D-glyceraldehyde 3-phosphate + acetaldehyde. Its pathway is carbohydrate degradation; 2-deoxy-D-ribose 1-phosphate degradation; D-glyceraldehyde 3-phosphate and acetaldehyde from 2-deoxy-alpha-D-ribose 1-phosphate: step 2/2. Catalyzes a reversible aldol reaction between acetaldehyde and D-glyceraldehyde 3-phosphate to generate 2-deoxy-D-ribose 5-phosphate. Participates in stress granule (SG) assembly. May allow ATP production from extracellular deoxyinosine in conditions of energy deprivation. The sequence is that of Deoxyribose-phosphate aldolase (DERA) from Homo sapiens (Human).